A 204-amino-acid polypeptide reads, in one-letter code: Uridylate kinase (204 aa).

26–31 contributes to the ATP binding site; that stretch reads GAGKGT. The segment at 46–76 is NMP; that stretch reads SAGDLLRAEQGRAGSQYGELIKNCIKEGQIV. A ribonucleoside 5'-phosphate-binding positions include Arg52, 74–76, 104–107, and Gln111; these read QIV and GFPR. The LID stretch occupies residues 141-151; sequence ERGKTSGRSDD. An ATP-binding site is contributed by Arg142. 2 residues coordinate a ribonucleoside 5'-phosphate: Arg148 and Arg159. Residue Arg187 participates in ATP binding.

The protein belongs to the adenylate kinase family. UMP-CMP kinase subfamily. In terms of assembly, monomer. It depends on Mg(2+) as a cofactor.

The protein resides in the cytoplasm. Its subcellular location is the nucleus. The catalysed reaction is UMP + ATP = UDP + ADP. In terms of biological role, catalyzes the phosphorylation of pyrimidine nucleoside monophosphates at the expense of ATP. Plays an important role in de novo pyrimidine nucleotide biosynthesis. Has preference for UMP and dUMP as phosphate acceptors, but can also use CMP, dCMP, AMP, GMP, dGMP and dTMP. ATP and dATP are the best phosphate donors, but can also use GTP, dGTP, dCTP, and dTTP to some degree. The polypeptide is Uridylate kinase (Saccharomyces cerevisiae (strain ATCC 204508 / S288c) (Baker's yeast)).